Here is a 794-residue protein sequence, read N- to C-terminus: DNA ligase (794 aa).

The disordered stretch occupies residues 1–47; it reads MEEDLFSLAAGKQPSQQATNETAPRAGEARENAGTDHPGNAEDPAHR. The span at 13-22 shows a compositional bias: polar residues; that stretch reads QPSQQATNET. The segment covering 27-47 has biased composition (basic and acidic residues); that stretch reads GEARENAGTDHPGNAEDPAHR. Residues 73 to 77, 122 to 123, and glutamate 160 each bind NAD(+); these read DAEYD and SI. Lysine 162 acts as the N6-AMP-lysine intermediate in catalysis. 4 residues coordinate NAD(+): arginine 183, glutamate 219, lysine 335, and lysine 359. Residues cysteine 457, cysteine 460, cysteine 475, and cysteine 480 each contribute to the Zn(2+) site. The BRCT domain maps to 717–794; that stretch reads IPAGSLSGKT…EEDFYKMIGN (78 aa).

This sequence belongs to the NAD-dependent DNA ligase family. LigA subfamily. Mg(2+) serves as cofactor. The cofactor is Mn(2+).

It catalyses the reaction NAD(+) + (deoxyribonucleotide)n-3'-hydroxyl + 5'-phospho-(deoxyribonucleotide)m = (deoxyribonucleotide)n+m + AMP + beta-nicotinamide D-nucleotide.. Its function is as follows. DNA ligase that catalyzes the formation of phosphodiester linkages between 5'-phosphoryl and 3'-hydroxyl groups in double-stranded DNA using NAD as a coenzyme and as the energy source for the reaction. It is essential for DNA replication and repair of damaged DNA. In Akkermansia muciniphila (strain ATCC BAA-835 / DSM 22959 / JCM 33894 / BCRC 81048 / CCUG 64013 / CIP 107961 / Muc), this protein is DNA ligase.